Consider the following 643-residue polypeptide: 1-deoxy-D-xylulose-5-phosphate synthase (643 aa).

Residues histidine 78 and alanine 119–serine 121 each bind thiamine diphosphate. Aspartate 150 contacts Mg(2+). Thiamine diphosphate contacts are provided by residues glycine 151–serine 152, asparagine 179, tyrosine 288, and glutamate 370. Asparagine 179 is a Mg(2+) binding site.

The protein belongs to the transketolase family. DXPS subfamily. Homodimer. It depends on Mg(2+) as a cofactor. Thiamine diphosphate serves as cofactor.

It carries out the reaction D-glyceraldehyde 3-phosphate + pyruvate + H(+) = 1-deoxy-D-xylulose 5-phosphate + CO2. It functions in the pathway metabolic intermediate biosynthesis; 1-deoxy-D-xylulose 5-phosphate biosynthesis; 1-deoxy-D-xylulose 5-phosphate from D-glyceraldehyde 3-phosphate and pyruvate: step 1/1. Catalyzes the acyloin condensation reaction between C atoms 2 and 3 of pyruvate and glyceraldehyde 3-phosphate to yield 1-deoxy-D-xylulose-5-phosphate (DXP). The chain is 1-deoxy-D-xylulose-5-phosphate synthase from Brucella melitensis biotype 2 (strain ATCC 23457).